The sequence spans 433 residues: MKELKHTKSEAMFKEAVKYIPGGVNSPVRAFGSVGLNPIFIDRAKGSKIYDVDGNEYIDYICSWGPLILGHSNEKLYEGIEETLRRGTSYGVPTEIEVKMAKLITEAYPSVDMVRMVNSGTEATMSALRVARGYTRRNKILKFEGCYHGHSDALLVKSGSGTITFGVPTSPGVPEGTVKDTLVCRYNDIEAVKRIFQEQGNEIAAVIVEPVSGNMGVVPGKQEFLQFLRDITKEYKSVLIFDEVITGFRLAYGGAQEVYGIEADMTCFGKIIGAGLPVGAYGGKREIMECVSPMGPVYQAGTLSGNPLAMHMGYKNLNILKENKDVYERLEEKAKRLEEGFNKNIKELGIKATVVRFKAMLCLFFAEGPLNNYDEVSKCDTEMYAKYFGEMLKRGVLIAPAQFEALFLSDAHTDEDIEYTIKANYEALKELKC.

Lys-270 carries the post-translational modification N6-(pyridoxal phosphate)lysine.

The protein belongs to the class-III pyridoxal-phosphate-dependent aminotransferase family. HemL subfamily. Homodimer. Requires pyridoxal 5'-phosphate as cofactor.

It is found in the cytoplasm. The enzyme catalyses (S)-4-amino-5-oxopentanoate = 5-aminolevulinate. It participates in porphyrin-containing compound metabolism; protoporphyrin-IX biosynthesis; 5-aminolevulinate from L-glutamyl-tRNA(Glu): step 2/2. The protein is Glutamate-1-semialdehyde 2,1-aminomutase of Clostridium novyi (strain NT).